A 327-amino-acid chain; its full sequence is tRNA N6-adenosine threonylcarbamoyltransferase (327 aa).

The Fe cation site is built by His109 and His113. Substrate is bound by residues 132–136 (MVSGG), Asp165, Gly178, Asp182, and Asn268. Asp296 serves as a coordination point for Fe cation.

The protein belongs to the KAE1 / TsaD family. Requires Fe(2+) as cofactor.

Its subcellular location is the cytoplasm. It carries out the reaction L-threonylcarbamoyladenylate + adenosine(37) in tRNA = N(6)-L-threonylcarbamoyladenosine(37) in tRNA + AMP + H(+). Functionally, required for the formation of a threonylcarbamoyl group on adenosine at position 37 (t(6)A37) in tRNAs that read codons beginning with adenine. Is involved in the transfer of the threonylcarbamoyl moiety of threonylcarbamoyl-AMP (TC-AMP) to the N6 group of A37, together with TsaE and TsaB. TsaD likely plays a direct catalytic role in this reaction. The polypeptide is tRNA N6-adenosine threonylcarbamoyltransferase (Thermotoga petrophila (strain ATCC BAA-488 / DSM 13995 / JCM 10881 / RKU-1)).